Consider the following 426-residue polypeptide: Torsin-4A (426 aa).

Residues 41-60 (QPGTEPDSGTGTLGPTGSLG) form a disordered region. Residues 48 to 60 (SGTGTLGPTGSLG) are compositionally biased toward low complexity. A phosphoserine mark is found at serine 58 and serine 76. Residue threonine 84 is modified to Phosphothreonine. Serine 101 carries the phosphoserine modification. The chain crosses the membrane as a helical span at residues 117–133 (CLLLLVAIVGFQVLNAI). 189-196 (GPSGVGKS) contacts ATP.

This sequence belongs to the ClpA/ClpB family. Torsin subfamily.

It is found in the membrane. This is Torsin-4A (Tor4a) from Mus musculus (Mouse).